The following is a 158-amino-acid chain: Transcription elongation factor GreA (158 aa).

The protein belongs to the GreA/GreB family.

In terms of biological role, necessary for efficient RNA polymerase transcription elongation past template-encoded arresting sites. The arresting sites in DNA have the property of trapping a certain fraction of elongating RNA polymerases that pass through, resulting in locked ternary complexes. Cleavage of the nascent transcript by cleavage factors such as GreA or GreB allows the resumption of elongation from the new 3'terminus. GreA releases sequences of 2 to 3 nucleotides. This Rhizobium leguminosarum bv. trifolii (strain WSM2304) protein is Transcription elongation factor GreA.